A 72-amino-acid polypeptide reads, in one-letter code: Translation initiation factor IF-1 (72 aa).

Positions 1-72 constitute an S1-like domain; sequence MAKDDVIEVE…TRGRIVWRGK (72 aa).

The protein belongs to the IF-1 family. As to quaternary structure, component of the 30S ribosomal translation pre-initiation complex which assembles on the 30S ribosome in the order IF-2 and IF-3, IF-1 and N-formylmethionyl-tRNA(fMet); mRNA recruitment can occur at any time during PIC assembly.

The protein resides in the cytoplasm. Its function is as follows. One of the essential components for the initiation of protein synthesis. Stabilizes the binding of IF-2 and IF-3 on the 30S subunit to which N-formylmethionyl-tRNA(fMet) subsequently binds. Helps modulate mRNA selection, yielding the 30S pre-initiation complex (PIC). Upon addition of the 50S ribosomal subunit IF-1, IF-2 and IF-3 are released leaving the mature 70S translation initiation complex. In Caldanaerobacter subterraneus subsp. tengcongensis (strain DSM 15242 / JCM 11007 / NBRC 100824 / MB4) (Thermoanaerobacter tengcongensis), this protein is Translation initiation factor IF-1.